A 210-amino-acid chain; its full sequence is Ribosomal RNA small subunit methyltransferase G (210 aa).

S-adenosyl-L-methionine is bound by residues Gly-74, Phe-79, 127 to 128 (IE), and Arg-143.

This sequence belongs to the methyltransferase superfamily. RNA methyltransferase RsmG family.

It is found in the cytoplasm. The catalysed reaction is guanosine(527) in 16S rRNA + S-adenosyl-L-methionine = N(7)-methylguanosine(527) in 16S rRNA + S-adenosyl-L-homocysteine. In terms of biological role, specifically methylates the N7 position of guanine in position 527 of 16S rRNA. The sequence is that of Ribosomal RNA small subunit methyltransferase G from Chelativorans sp. (strain BNC1).